An 834-amino-acid polypeptide reads, in one-letter code: MVMAVEDSVVRVVVRVRPPTPKELESQRRPVIQVVDERMLVFDPEECDGGFPGLKWSGSHNGPKKKGKDLTFVFDRVFGEMATQEDVFQHTTHNILDSFLQGYNCSVFAYGATGAGKTHTMLGREGEPGIMYLTTMELYRRLEARQEEKQFEVLISYLEVYNEQIHDLLEPKGPLTIREDPDKGVVVPGLSFHQPASAEQLLEMLTRGNCSRTQHPTDANATSSRSHAIFQIFVKQQDRVPGLTQALRVAKMSLIDLAGSERASSTHAKGERLREGANINRSLLALINVLNALADAKGRKSHVPYRDSKLTRLLKDSIGGNCRTVMIAAISPSSLTYEDTYNTLKYADRAKEIRLTLKSNVISVDHHISQYATICQQLQAEVAFLREKLQMYEAGAQALQQQCSPQPPTLSIPQSLSSSSLQPGPSSQSSTLECHAKNETLQEESLGSDAQGQEIVEESASEQEQCPQDKQCPTQKPEPNLPGSPSPSVQAKPGTGQHSPQKQDADHSKQLALQVLRLAQRQYSLLQAANLLTPDMISEFETLQQLVLEESVDHRAESPRSPALARGDPLAQALCSESKSSGYCGPVTRTMAKQLNGLTHTLGAPLAPDCTSDKTFQKPTKEKKRKLTPEEPGSLPAPNLEMKRQRQSFLPCLRRGSLPKAQPCSEPRTPKRERASSPSPSSRVCPATVIKSRVPLGPSALQNCSTPLALPTRDLNTTFNVSEESPSKPSFQEFVDWEKVSPELNSTDQPFLPSAPVFIFTKGRKPSLPAVTASKKRRTMRPSVSRGRSCIARLHSSTLKKPNRPFTVPEPPLSPHCLDDQRTPKGLTGVTESY.

Residues 9–353 (VVRVVVRVRP…LKYADRAKEI (345 aa)) enclose the Kinesin motor domain. 111–118 (GATGAGKT) provides a ligand contact to ATP. Positions 368–404 (ISQYATICQQLQAEVAFLREKLQMYEAGAQALQQQCS) form a coiled coil. Disordered stretches follow at residues 400 to 508 (QQQC…ADHS), 602 to 642 (LGAP…NLEM), 655 to 686 (RGSL…RVCP), and 800 to 834 (KKPN…TESY). The span at 411-432 (SIPQSLSSSSLQPGPSSQSSTL) shows a compositional bias: low complexity. Threonine 431 is subject to Phosphothreonine. The span at 462–474 (EQEQCPQDKQCPT) shows a compositional bias: polar residues. Serine 484 bears the Phosphoserine mark. Residues 611–620 (TSDKTFQKPT) show a composition bias toward basic and acidic residues. Positions 619–627 (PTKEKKRKL) match the Nuclear localization signal motif. A phosphoserine mark is found at serine 634 and serine 657. At threonine 669 the chain carries Phosphothreonine. At serine 814 the chain carries Phosphoserine.

Belongs to the TRAFAC class myosin-kinesin ATPase superfamily. Kinesin family. As to quaternary structure, interacts with MAPRE1; this interaction is required for efficient accumulation at microtubule plus ends. Interacts with KIF2C at microtubule tips; this interaction increases the affinity of both partners for microtubule plus ends and is required for robust microtubule depolymerization. KIF2C phosphorylation by AURKA or AURKB strongly reduces KIF18B-binding.

It localises to the nucleus. Its subcellular location is the cytoplasm. The protein localises to the cytoskeleton. In terms of biological role, in complex with KIF2C, constitutes the major microtubule plus-end depolymerizing activity in mitotic cells. Its major role may be to transport KIF2C and/or MAPRE1 along microtubules. The polypeptide is Kinesin-like protein KIF18B (Kif18b) (Mus musculus (Mouse)).